Reading from the N-terminus, the 737-residue chain is Palmitoyltransferase akr1 (737 aa).

The interval 1-60 (MSSGDPPSGLQASGSNSSAALGLSPPSAPSGKSAATPPKVATDDASVELSSMKSERSPAK) is disordered. The Cytoplasmic portion of the chain corresponds to 1–314 (MSSGDPPSGL…YVRDKAIMSK (314 aa)). The span at 7–38 (PSGLQASGSNSSAALGLSPPSAPSGKSAATPP) shows a compositional bias: low complexity. ANK repeat units lie at residues 97 to 126 (EGITPLHWAAINNQYAMCKFLIDSGADVNA), 131 to 160 (SVATPAMWAAQRCHYYIVHLLLQYGADPLL), 164 to 193 (QGYNILHLATIDGNAFLLVLLLHQEIPVDV), 197 to 226 (QGHTGLMWAAYKGYPACVDLFLRWGANPNA), and 230 to 259 (GGLAPLHWALVKGSLPCVLKILEYGADRFA). The next 2 helical transmembrane spans lie at 315–335 (FFFFWPFLLLFVVLWILSNMV) and 336–356 (VYFAIPVAAVAVFGLQWVAKK). The Cytoplasmic portion of the chain corresponds to 357-372 (AASQGPSEFRIIQKTP). The chain crosses the membrane as a helical span at residues 373-393 (FLAGVFAGSLFWVFVRYVLYV). At 394-402 (LPATYSTNP) the chain is on the lumenal side. A helical transmembrane segment spans residues 403 to 423 (FLNLGFVVFFSLTTYFYFYSM). Topologically, residues 424–500 (VADPGYVPKL…NCVGVNNLRQ (77 aa)) are cytoplasmic. Residues 456–506 (NFCVYCMIRRPLRSKHCRRCSRCVAKHDHHCPWIDNCVGVNNLRQFVLYIL) form the DHHC domain. Cys486 serves as the catalytic S-palmitoyl cysteine intermediate. The chain crosses the membrane as a helical span at residues 501–521 (FVLYILCLEIGIILFLHLTFN). The Lumenal portion of the chain corresponds to 522-549 (YINGLPAPAEPICNILNDQICSFVLRDT). A helical transmembrane segment spans residues 550–570 (FTLLLDVWIAIQLVWVTMLGV). Over 571-737 (VQLVQVSRNQ…VAYDEAADIV (167 aa)) the chain is Cytoplasmic.

Belongs to the DHHC palmitoyltransferase family. AKR/ZDHHC17 subfamily.

It is found in the early endosome membrane. The protein resides in the golgi apparatus membrane. It catalyses the reaction L-cysteinyl-[protein] + hexadecanoyl-CoA = S-hexadecanoyl-L-cysteinyl-[protein] + CoA. Functionally, palmitoyltransferase specific for casein kinase 1. This chain is Palmitoyltransferase akr1 (akr1), found in Emericella nidulans (strain FGSC A4 / ATCC 38163 / CBS 112.46 / NRRL 194 / M139) (Aspergillus nidulans).